Reading from the N-terminus, the 98-residue chain is Hainantoxin-XVII.3 (98 aa).

Positions 1-40 are cleaved as a signal peptide; that stretch reads MTTVGVSLFRRSPEKITMKIATFLGLSFLLIASYFLICEA. A propeptide spanning residues 41 to 64 is cleaved from the precursor; the sequence is QHPGFQELLILEENMRDPENSKER. Disulfide bonds link C66–C81, C73–C85, and C80–C95.

The protein belongs to the hainantoxin family. 17 subfamily. Expressed by the venom gland.

The protein resides in the secreted. Functionally, inhibits with low potency Kv1.2/KCNA2 and Kv1.3/KCNA3 voltage-gated potassium channels. The polypeptide is Hainantoxin-XVII.3 (Cyriopagopus hainanus (Chinese bird spider)).